Reading from the N-terminus, the 1479-residue chain is ABC transporter ecdL (1479 aa).

3 helical membrane passes run 32–52 (LLFE…SVAL), 82–102 (LSNA…WLSF), and 142–162 (IASI…VEAM). N-linked (GlcNAc...) asparagine glycans are attached at residues Asn-183 and Asn-234. The next 2 membrane-spanning stretches (helical) occupy residues 251–271 (WGGF…PFLV) and 291–311 (SGLI…TAAF). Residues 258–535 (LCLIGVNYAQ…FVESLMGLRQ (278 aa)) form the ABC transmembrane type-1 1 domain. Asn-345 is a glycosylation site (N-linked (GlcNAc...) asparagine). 2 consecutive transmembrane segments (helical) span residues 365–382 (LHET…LWLL) and 391–411 (VAAA…SGLL). Asn-427 is a glycosylation site (N-linked (GlcNAc...) asparagine). 2 helical membrane passes run 469-489 (LLVA…TFAF) and 503-523 (PLLA…GQAV). Residues 607–835 (IVLQNHTASW…GSSLRLEELV (229 aa)) form the ABC transporter 1 domain. Residues Asn-611 and Asn-628 are each glycosylated (N-linked (GlcNAc...) asparagine). 641-648 (GPIGSGKS) contacts ATP. N-linked (GlcNAc...) asparagine glycosylation is found at Asn-793 and Asn-797. 5 helical membrane passes run 885–905 (TIGW…VVAL), 955–975 (LFAV…LHLM), 1028–1048 (ALIG…VIVY), 1052–1072 (YLAA…MFYL), and 1135–1155 (IWLT…LVSI). An ABC transmembrane type-1 2 domain is found at 932–1193 (IWLKFWTEAN…LVYNWTALEN (262 aa)). A glycan (N-linked (GlcNAc...) asparagine) is linked at Asn-1161. The helical transmembrane segment at 1165 to 1185 (ASIGLALVNLIAFGANMKGLV) threads the bilayer. Asn-1187 carries N-linked (GlcNAc...) asparagine glycosylation. An ABC transporter 2 domain is found at 1230–1461 (IKFKSVTASY…RSIFASLLRS (232 aa)). 1264–1271 (GRTGCGKS) contributes to the ATP binding site. Residues 1460–1479 (RSGDEEPGNGHKHESEGEEE) are disordered. Positions 1461 to 1479 (SGDEEPGNGHKHESEGEEE) are enriched in basic and acidic residues.

The protein belongs to the ABC transporter superfamily. ABCC family. Conjugate transporter (TC 3.A.1.208) subfamily.

The protein resides in the cell membrane. Its function is as follows. ABC transporter; part of the gene cluster that mediates the biosynthesis of echinocandin B, a fungal lipidated cyclic hexapeptide that acts as an antifungal agent. The polypeptide is ABC transporter ecdL (Aspergillus rugulosus (Emericella rugulosa)).